The primary structure comprises 366 residues: Ferrochelatase (366 aa).

2 residues coordinate Fe cation: His-210 and Glu-293.

It belongs to the ferrochelatase family.

The protein localises to the cytoplasm. It carries out the reaction heme b + 2 H(+) = protoporphyrin IX + Fe(2+). It participates in porphyrin-containing compound metabolism; protoheme biosynthesis; protoheme from protoporphyrin-IX: step 1/1. Its function is as follows. Catalyzes the ferrous insertion into protoporphyrin IX. The protein is Ferrochelatase of Leptospira borgpetersenii serovar Hardjo-bovis (strain JB197).